The following is a 763-amino-acid chain: Lysine-specific histone demethylase 1 homolog 2 (763 aa).

The SWIRM domain occupies 53 to 152 (QRETETEALI…FGVSAAFPAS (100 aa)). Positions 192, 194, 200, and 571 each coordinate FAD.

This sequence belongs to the flavin monoamine oxidase family. FAD serves as cofactor.

Probable histone demethylase. The sequence is that of Lysine-specific histone demethylase 1 homolog 2 from Oryza sativa subsp. japonica (Rice).